A 685-amino-acid chain; its full sequence is Bifunctional diguanylate cyclase/cyclic di-GMP phosphodiesterase MucR (685 aa).

One can recognise an MHYT domain in the interval 6–199 (YNQVLVAFSL…YTGMAAAQFP (194 aa)). Helical transmembrane passes span 9–29 (VLVA…LDMA), 44–64 (LIGG…VGML), 77–97 (GLTL…LWLV), 117–137 (GIAA…GIVY), 141–161 (WLGL…WIAF), 175–195 (AGAA…GMAA), and 214–234 (GWLA…ALIV). Topologically, residues 235–685 (SVLDSRLEAR…PAEQLLASVA (451 aa)) are cytoplasmic. Residues 293–425 (RRFAVLFMDL…GRNGYCFFES (133 aa)) enclose the GGDEF domain. Residues 434–685 (QLQLLHDLRQ…PAEQLLASVA (252 aa)) enclose the EAL domain. The 3',3'-c-di-GMP site is built by Gln-455, Glu-469, Leu-472, Arg-473, Asn-528, and Gln-533. Position 469 (Glu-469) interacts with Mg(2+). Asn-528 provides a ligand contact to Mg(2+). The Mg(2+) site is built by Glu-560, Asp-590, and Asp-591. Asp-590 provides a ligand contact to 3',3'-c-di-GMP. Position 614 (Arg-614) interacts with 3',3'-c-di-GMP. Glu-647 is a binding site for Mg(2+). 2 residues coordinate 3',3'-c-di-GMP: Glu-650 and Phe-669.

As to quaternary structure, homodimer. It depends on Mg(2+) as a cofactor.

It is found in the cell inner membrane. It catalyses the reaction 2 GTP = 3',3'-c-di-GMP + 2 diphosphate. It carries out the reaction 3',3'-c-di-GMP + H2O = 5'-phosphoguanylyl(3'-&gt;5')guanosine + H(+). Displays both diguanylate cyclase (DGC) and c-di-GMP-specific phosphodiesterase (PDE) activity. Probably modulates DGC and PDE activities, and thus c-di-GMP levels, in a growth mode-dependent manner. May act as a PDE under planktonic growth conditions and as a DGC in biofilms. During biofilm formation, it specifically activates alginate biosynthesis via generation of a localized c-di-GMP pool in the vicinity of the alginate biosynthesis protein Alg44. This is Bifunctional diguanylate cyclase/cyclic di-GMP phosphodiesterase MucR from Pseudomonas aeruginosa (strain ATCC 15692 / DSM 22644 / CIP 104116 / JCM 14847 / LMG 12228 / 1C / PRS 101 / PAO1).